Here is a 208-residue protein sequence, read N- to C-terminus: Small ribosomal subunit protein uS4 (208 aa).

The disordered stretch occupies residues 28 to 48 (YFEKRPYPPGEHGRARRRTES). The region spanning 95 to 159 (MRLDALVLRS…ARTPFQVAAA (65 aa)) is the S4 RNA-binding domain.

It belongs to the universal ribosomal protein uS4 family. Part of the 30S ribosomal subunit. Contacts protein S5. The interaction surface between S4 and S5 is involved in control of translational fidelity.

Functionally, one of the primary rRNA binding proteins, it binds directly to 16S rRNA where it nucleates assembly of the body of the 30S subunit. In terms of biological role, with S5 and S12 plays an important role in translational accuracy. The chain is Small ribosomal subunit protein uS4 from Beutenbergia cavernae (strain ATCC BAA-8 / DSM 12333 / CCUG 43141 / JCM 11478 / NBRC 16432 / NCIMB 13614 / HKI 0122).